Reading from the N-terminus, the 281-residue chain is Pantothenate synthetase (281 aa).

31 to 38 (MGALHDGH) contacts ATP. The Proton donor role is filled by H38. Q62 is a binding site for (R)-pantoate. Residue Q62 coordinates beta-alanine. 148–151 (GQKD) lines the ATP pocket. Position 154 (Q154) interacts with (R)-pantoate. ATP contacts are provided by residues V177 and 185–188 (LSSR).

The protein belongs to the pantothenate synthetase family. As to quaternary structure, homodimer.

It is found in the cytoplasm. It carries out the reaction (R)-pantoate + beta-alanine + ATP = (R)-pantothenate + AMP + diphosphate + H(+). It participates in cofactor biosynthesis; (R)-pantothenate biosynthesis; (R)-pantothenate from (R)-pantoate and beta-alanine: step 1/1. Functionally, catalyzes the condensation of pantoate with beta-alanine in an ATP-dependent reaction via a pantoyl-adenylate intermediate. This Dinoroseobacter shibae (strain DSM 16493 / NCIMB 14021 / DFL 12) protein is Pantothenate synthetase.